We begin with the raw amino-acid sequence, 231 residues long: ABC transporter ATP-binding protein YtrE (231 aa).

In terms of domain architecture, ABC transporter spans 4–231 (VQHIDHSFTI…VLKGGITVEV (228 aa)). 42–49 (GRSGSGKS) is a binding site for ATP.

The protein belongs to the ABC transporter superfamily. As to quaternary structure, the complex is composed of 2 ATP-binding proteins (YtrB and YtrE), 2 transmembrane proteins (YtrC and YtrD) and a solute-binding protein (YtrF).

It localises to the cell membrane. In terms of biological role, part of the ABC transporter complex YtrBCDEF that plays a role in acetoin utilization during stationary phase and sporulation. The polypeptide is ABC transporter ATP-binding protein YtrE (ytrE) (Bacillus subtilis (strain 168)).